Consider the following 273-residue polypeptide: Tryptase (273 aa).

Positions 1 to 18 (MLKLLLLTLPLLSSLVHA) are cleaved as a signal peptide. Residues 19-28 (APGPAMTREG) constitute a propeptide, activation peptide. The Peptidase S1 domain occupies 29-270 (IVGGQEAHGN…YLDWIHHYVP (242 aa)). N-linked (GlcNAc...) asparagine glycosylation is present at Asn-49. Cys-57 and Cys-73 are disulfide-bonded. Active-site charge relay system residues include His-72 and Asp-119. An N-linked (GlcNAc...) asparagine glycan is attached at Asn-130. 3 disulfides stabilise this stretch: Cys-153–Cys-228, Cys-186–Cys-209, and Cys-218–Cys-246. Ser-222 serves as the catalytic Charge relay system.

Belongs to the peptidase S1 family. Tryptase subfamily.

It catalyses the reaction Preferential cleavage: Arg-|-Xaa, Lys-|-Xaa, but with more restricted specificity than trypsin.. Tryptase is the major neutral protease present in mast cells and is secreted upon the coupled activation-degranulation response of this cell type. May play a role in innate immunity. This is Tryptase (Tpsab1) from Mus musculus (Mouse).